Here is a 460-residue protein sequence, read N- to C-terminus: Argininosuccinate lyase (460 aa).

This sequence belongs to the lyase 1 family. Argininosuccinate lyase subfamily.

It localises to the cytoplasm. The catalysed reaction is 2-(N(omega)-L-arginino)succinate = fumarate + L-arginine. It functions in the pathway amino-acid biosynthesis; L-arginine biosynthesis; L-arginine from L-ornithine and carbamoyl phosphate: step 3/3. The protein is Argininosuccinate lyase of Oleidesulfovibrio alaskensis (strain ATCC BAA-1058 / DSM 17464 / G20) (Desulfovibrio alaskensis).